The chain runs to 101 residues: Large ribosomal subunit protein uL24 (101 aa).

It belongs to the universal ribosomal protein uL24 family. Part of the 50S ribosomal subunit.

One of two assembly initiator proteins, it binds directly to the 5'-end of the 23S rRNA, where it nucleates assembly of the 50S subunit. Its function is as follows. One of the proteins that surrounds the polypeptide exit tunnel on the outside of the subunit. The protein is Large ribosomal subunit protein uL24 of Ligilactobacillus salivarius (strain UCC118) (Lactobacillus salivarius).